The chain runs to 407 residues: MPKSSSNNPCPPGEILREGYYRHGYERRGFKRSSGTYIPPTEVSEAYVPPTCIIDRGKPGKGPRILPKPGNDLHLSWYGYAVHEPERDRHRALVEASQENDPLEVLRRLNLLRNYQAYPDVKDIMSQDVKFMSDFYAKYKERNQEANRFGRSNSRSRSNSRSKSSRSRSNNRSKSSRSSSTQSKSNNRSNSRSNSKTSRRLKKLPENDLDLDQDGGNRYGGDPLTSITSDTTGNQILETNIKLSKETECSEGKCQVFNKVYESHTINGKKIVFETLDQNDSENVLSLDKLYLDSDQTIDRVRQNLSTNKGYIIGIKSDNKLEGYCWYKEISNNEVKIFWFCANKGYGTALYTFMEKYFKLNNYSRIVIDVSMEGSYAVRRINFWNHQGFKTYQVKTDNHKIHMEKDI.

The interval glutamate 145–threonine 231 is disordered. The segment covering serine 158–serine 175 has biased composition (basic residues). The segment covering serine 176 to lysine 196 has biased composition (low complexity). An N-acetyltransferase domain is found at isoleucine 271–isoleucine 407.

It localises to the virion. This is an uncharacterized protein from Acanthamoeba polyphaga (Amoeba).